The sequence spans 390 residues: Protein arginine N-methyltransferase 1.1 (390 aa).

Residues 1-10 (MTKNSNHDEN) are compositionally biased toward basic and acidic residues. The tract at residues 1–59 (MTKNSNHDENEFISFEPNQNTKIRFEDADEDEVAEGSGVAGEETPQDESMFDAGESADT) is disordered. The 322-residue stretch at 69–390 (ADYYFDSYSH…ISRTQHYKMR (322 aa)) folds into the SAM-dependent MTase PRMT-type domain. Residues E181 and E190 contribute to the active site.

Belongs to the class I-like SAM-binding methyltransferase superfamily. Protein arginine N-methyltransferase family. As to quaternary structure, interacts with PRMT12, MBD7 and FIB2.

The protein resides in the nucleus. The protein localises to the cytoplasm. It carries out the reaction L-arginyl-[protein] + 2 S-adenosyl-L-methionine = N(omega),N(omega)-dimethyl-L-arginyl-[protein] + 2 S-adenosyl-L-homocysteine + 2 H(+). Methylates (mono and asymmetric dimethylation) the guanidino nitrogens of arginyl residues present in a glycine and arginine-rich domain. Type I arginine methyltransferase active on both histones and non-histone proteins. Required for leaves and flowers development. Mediates the methylation of MBD7 and MED36A. The sequence is that of Protein arginine N-methyltransferase 1.1 (PRMT11) from Arabidopsis thaliana (Mouse-ear cress).